Reading from the N-terminus, the 121-residue chain is B-box domain protein 31 (121 aa).

A B box-type; atypical zinc finger spans residues 26 to 72 (SVPVRCELCDGDASVFCEADSAFLCRKCDRWVHGANFLAWRHVRRVL). Residues 117–121 (PFVFL) carry the PFVFL motif.

Highly expressed in shoot apical meristems and in vascular tissues of leaves. Also detected in petioles.

Its function is as follows. Developmental regulator acting by forming heterodimeric complexes, that sequester CO and CO-like (COL) proteins into non-functional complexes. Involved in the CO-mediated long-day flowering-promotion pathway. Engages CO and the transcriptional repressor TPL in a tripartite complex. This is B-box domain protein 31 from Arabidopsis thaliana (Mouse-ear cress).